A 364-amino-acid polypeptide reads, in one-letter code: Mannose-1-phosphate guanyltransferase (364 aa).

Belongs to the transferase hexapeptide repeat family.

Its subcellular location is the cytoplasm. The catalysed reaction is alpha-D-mannose 1-phosphate + GTP + H(+) = GDP-alpha-D-mannose + diphosphate. It participates in nucleotide-sugar biosynthesis; GDP-alpha-D-mannose biosynthesis; GDP-alpha-D-mannose from alpha-D-mannose 1-phosphate (GTP route): step 1/1. Functionally, involved in cell wall synthesis where it is required for glycosylation. Involved in cell cycle progression through cell-size checkpoint. This Neurospora crassa (strain ATCC 24698 / 74-OR23-1A / CBS 708.71 / DSM 1257 / FGSC 987) protein is Mannose-1-phosphate guanyltransferase (mpg-1).